A 131-amino-acid polypeptide reads, in one-letter code: Large ribosomal subunit protein bL17 (131 aa).

The protein belongs to the bacterial ribosomal protein bL17 family. Part of the 50S ribosomal subunit. Contacts protein L32.

The polypeptide is Large ribosomal subunit protein bL17 (Bordetella parapertussis (strain 12822 / ATCC BAA-587 / NCTC 13253)).